A 91-amino-acid polypeptide reads, in one-letter code: Large ribosomal subunit protein bL27 (91 aa).

Residues 1 to 21 (MAHKKAGGSSRNGRDSESKRL) are disordered.

This sequence belongs to the bacterial ribosomal protein bL27 family.

The polypeptide is Large ribosomal subunit protein bL27 (Azoarcus sp. (strain BH72)).